We begin with the raw amino-acid sequence, 726 residues long: Peroxisomal fatty acid beta-oxidation multifunctional protein (726 aa).

It in the N-terminal section; belongs to the enoyl-CoA hydratase/isomerase family. This sequence in the central section; belongs to the 3-hydroxyacyl-CoA dehydrogenase family. In terms of assembly, monomer.

The protein localises to the peroxisome. Its subcellular location is the cytoplasm. It localises to the cytoskeleton. The catalysed reaction is a (3S)-3-hydroxyacyl-CoA = a (2E)-enoyl-CoA + H2O. It carries out the reaction a 4-saturated-(3S)-3-hydroxyacyl-CoA = a (3E)-enoyl-CoA + H2O. The enzyme catalyses a (3Z)-enoyl-CoA = a 4-saturated (2E)-enoyl-CoA. It catalyses the reaction a (3E)-enoyl-CoA = a 4-saturated (2E)-enoyl-CoA. The catalysed reaction is (3S)-3-hydroxybutanoyl-CoA = (3R)-3-hydroxybutanoyl-CoA. It carries out the reaction a (3S)-3-hydroxyacyl-CoA + NAD(+) = a 3-oxoacyl-CoA + NADH + H(+). The protein operates within lipid metabolism; fatty acid beta-oxidation. Functionally, multifunctional enzyme involved in fatty acid beta-oxidation. Also binds to RNA and microtubules. Possible role in subcellular mRNA localization and RNA-cytoskeleton interactions. In Oryza sativa subsp. japonica (Rice), this protein is Peroxisomal fatty acid beta-oxidation multifunctional protein (MFP).